Consider the following 372-residue polypeptide: Ca(2+)/H(+) antiporter (372 aa).

The next 11 membrane-spanning stretches (helical) occupy residues 7 to 27, 29 to 49, 62 to 82, 94 to 114, 134 to 154, 162 to 182, 222 to 242, 251 to 271, 294 to 314, 320 to 340, and 352 to 372; these read IFLV…LGWG, TTVF…MGTA, GGLL…YIAL, LTGS…FLGG, MNLG…STGV, LSVA…VFSM, LWTG…ELLV, SLGL…GNAA, GSSL…GWAI, LNFN…VNSI, and ILLL…PTLV.

It belongs to the Ca(2+):cation antiporter (CaCA) (TC 2.A.19) family. Cation/proton exchanger (CAX) subfamily.

It localises to the cell inner membrane. Its function is as follows. Ca(+)/H(+) antiporter that extrudes calcium in exchange for external protons. Plays an important role in salt tolerance. Does not transport sodium or lithium. This chain is Ca(2+)/H(+) antiporter, found in Synechocystis sp. (strain ATCC 27184 / PCC 6803 / Kazusa).